Here is a 428-residue protein sequence, read N- to C-terminus: Adenylosuccinate synthetase (428 aa).

Residues 12–18 (GDEGKGK) and 40–42 (GHT) each bind GTP. The active-site Proton acceptor is the D13. 2 residues coordinate Mg(2+): D13 and G40. Residues 13-16 (DEGK), 38-41 (NAGH), T129, R143, Q224, T239, and R303 contribute to the IMP site. The Proton donor role is filled by H41. 299–305 (VTTGRIR) is a binding site for substrate. GTP contacts are provided by residues R305, 331–333 (KVD), and 410–412 (AYG).

This sequence belongs to the adenylosuccinate synthetase family. In terms of assembly, homodimer. It depends on Mg(2+) as a cofactor.

It localises to the cytoplasm. It carries out the reaction IMP + L-aspartate + GTP = N(6)-(1,2-dicarboxyethyl)-AMP + GDP + phosphate + 2 H(+). Its pathway is purine metabolism; AMP biosynthesis via de novo pathway; AMP from IMP: step 1/2. Plays an important role in the de novo pathway of purine nucleotide biosynthesis. Catalyzes the first committed step in the biosynthesis of AMP from IMP. This is Adenylosuccinate synthetase from Francisella tularensis subsp. holarctica (strain FTNF002-00 / FTA).